We begin with the raw amino-acid sequence, 426 residues long: LIM/homeobox protein Lhx2 (426 aa).

The segment covering 14–24 has biased composition (basic and acidic residues); the sequence is VIDEMDRRQER. The interval 14 to 42 is disordered; the sequence is VIDEMDRRQERGSGISSAIDRGDTETTMP. LIM zinc-binding domains lie at 52 to 104 and 114 to 167; these read CAGC…CKED and CARC…CRLH. A disordered region spans residues 248 to 268; sequence DAEHLDRDQPYPSSQKTKRMR. Residues 264 to 323 constitute a DNA-binding region (homeobox); sequence TKRMRTSFKHHQLRTMKSYFAINHNPDAKDLKQLAQKTGLTKRVLQVWFQNARAKFRRNL. The short motif at 305-321 is the Nuclear localization signal element; the sequence is KRVLQVWFQNARAKFRR. Positions 326–354 are enriched in polar residues; it reads QENTGVDKTSDATLQTGTPSGPASELSNA. The segment at 326 to 370 is disordered; sequence QENTGVDKTSDATLQTGTPSGPASELSNASLSPSSTPTTLTDLTS. Low complexity predominate over residues 355–370; it reads SLSPSSTPTTLTDLTS.

Interacts (via LIM domains) with CITED2. Interacts with POU4F2. Found in discrete regions of the developing CNS, primarily in diencephalic and telencephalic structures and a subset of lymphoid tissues. Also found in embryonic spinal cord and fetal liver.

It is found in the nucleus. Acts as a transcriptional activator. Stimulates the promoter of the alpha-glycoprotein gene. Transcriptional regulatory protein involved in the control of cell differentiation in developing lymphoid and neural cell types. In Rattus norvegicus (Rat), this protein is LIM/homeobox protein Lhx2 (Lhx2).